A 95-amino-acid polypeptide reads, in one-letter code: L-amino-acid oxidase (95 aa).

The protein belongs to the flavin monoamine oxidase family. FIG1 subfamily. In terms of assembly, homodimer; non-covalently linked. The cofactor is FAD. In terms of processing, N-glycosylated. As to expression, expressed by the venom gland.

The protein localises to the secreted. It carries out the reaction an L-alpha-amino acid + O2 + H2O = a 2-oxocarboxylate + H2O2 + NH4(+). The enzyme catalyses L-leucine + O2 + H2O = 4-methyl-2-oxopentanoate + H2O2 + NH4(+). The catalysed reaction is L-phenylalanine + O2 + H2O = 3-phenylpyruvate + H2O2 + NH4(+). It catalyses the reaction L-tryptophan + O2 + H2O = indole-3-pyruvate + H2O2 + NH4(+). It carries out the reaction L-methionine + O2 + H2O = 4-methylsulfanyl-2-oxobutanoate + H2O2 + NH4(+). The enzyme catalyses L-arginine + O2 + H2O = 5-guanidino-2-oxopentanoate + H2O2 + NH4(+). In terms of biological role, catalyzes an oxidative deamination of predominantly hydrophobic and aromatic L-amino acids, thus producing hydrogen peroxide that may contribute to the diverse toxic effects of this enzyme. Is highly active on L-Met, L-Leu, L-Phe, L-Trp, and L-Arg, and no weakly or no active on L-His, L-Tyr, L-Ile, L-Gln, and L-Lys. Exhibits diverse biological activities, such as antibacterial activity against both Gram-positive (B.subtilis) and Gram-negative (E.coli) bacteria, and inhibition of ADP- or collagen-induced platelet aggregation. Effects of snake L-amino oxidases on platelets are controversial, since they either induce aggregation or inhibit agonist-induced aggregation. These different effects are probably due to different experimental conditions. This protein may also induce hemorrhage, hemolysis, edema, apoptosis, and have antiparasitic activities. This is L-amino-acid oxidase from Naja oxiana (Central Asian cobra).